The following is a 342-amino-acid chain: N-acetyl-gamma-glutamyl-phosphate reductase (342 aa).

The active site involves Cys147.

Belongs to the NAGSA dehydrogenase family. Type 1 subfamily.

Its subcellular location is the cytoplasm. The catalysed reaction is N-acetyl-L-glutamate 5-semialdehyde + phosphate + NADP(+) = N-acetyl-L-glutamyl 5-phosphate + NADPH + H(+). It functions in the pathway amino-acid biosynthesis; L-arginine biosynthesis; N(2)-acetyl-L-ornithine from L-glutamate: step 3/4. Its function is as follows. Catalyzes the NADPH-dependent reduction of N-acetyl-5-glutamyl phosphate to yield N-acetyl-L-glutamate 5-semialdehyde. The sequence is that of N-acetyl-gamma-glutamyl-phosphate reductase from Campylobacter jejuni (strain RM1221).